The following is a 71-amino-acid chain: Phosphatidylinositol N-acetylglucosaminyltransferase subunit Y (71 aa).

The Cytoplasmic segment spans residues 1–5 (MIRSL). The chain crosses the membrane as a helical span at residues 6–26 (PTMTVLIPLVSLAGLLYSASV). Topologically, residues 27–44 (EEGFPEGCTSASSLCFYS) are lumenal. A helical transmembrane segment spans residues 45–65 (LLLPVTVPVYVFFHLWTWMGL). The Cytoplasmic portion of the chain corresponds to 66–71 (KLFRHN).

As to quaternary structure, component of the glycosylphosphatidylinositol-N-acetylglucosaminyltransferase (GPI-GnT) complex composed at least by PIGA, PIGC, PIGH, PIGP, PIGQ, PIGY and DPM2. Interacts directly with PIGA; this interaction regulates glycosylphosphatidylinositol-N-acetylglucosaminyltransferase activity. Does not interact with Ras proteins.

The protein localises to the endoplasmic reticulum membrane. It participates in glycolipid biosynthesis; glycosylphosphatidylinositol-anchor biosynthesis. Part of the glycosylphosphatidylinositol-N-acetylglucosaminyltransferase (GPI-GnT) complex that catalyzes the transfer of N-acetylglucosamine from UDP-N-acetylglucosamine to phosphatidylinositol and participates in the first step of GPI biosynthesis. May act by regulating the catalytic subunit PIGA. The sequence is that of Phosphatidylinositol N-acetylglucosaminyltransferase subunit Y from Mus musculus (Mouse).